Here is a 65-residue protein sequence, read N- to C-terminus: Putative antitoxin VapB7 (65 aa).

This sequence belongs to the UPF0165 family.

Possibly the antitoxin component of a type II toxin-antitoxin (TA) system. Its cognate toxin is VapC7 (Potential). This Archaeoglobus fulgidus (strain ATCC 49558 / DSM 4304 / JCM 9628 / NBRC 100126 / VC-16) protein is Putative antitoxin VapB7 (vapB7).